The sequence spans 82 residues: Consomatin Mao1 (82 aa).

Residues 1-22 form the signal peptide; sequence MQTASWVMVMMMVWITAPLSEG. The propeptide occupies 23-57; the sequence is GKLNDVIRGLVPDDVTPQLILRSLFFHRPSDSVVR. C65 and C70 are oxidised to a cystine. Residue W67 is modified to D-tryptophan. 3 positions are modified to 4-hydroxyproline: P71, P72, and P74. Residues 75-82 constitute a propeptide that is removed on maturation; that stretch reads WRRPNGKG.

It belongs to the conotoxin C superfamily. Consomatin family. In terms of tissue distribution, expressed by the venom duct.

Its subcellular location is the secreted. Moderately activates human somatostatin receptors (SSTR) with a preferential activation of SSTR1 and SSTR4. In vivo, does not cause behavioral changes in mice within a few minutes of intracranial injection, but causes a progressive loss of movement thereafter. Four to five hours after injection, mice recover, even with the highest dose tested. Shows antinociception and antihyperalgesia activities in two mouse models of acute pain, most probably by acting outside the central nervous system. In Conus maioensis (Sea snail), this protein is Consomatin Mao1.